A 546-amino-acid polypeptide reads, in one-letter code: Chaperonin GroEL (546 aa).

ATP contacts are provided by residues 30–33 (TLGP), Lys51, 87–91 (DGTTT), Gly415, 479–481 (NAA), and Asp495.

It belongs to the chaperonin (HSP60) family. In terms of assembly, forms a cylinder of 14 subunits composed of two heptameric rings stacked back-to-back. Interacts with the co-chaperonin GroES.

It localises to the cytoplasm. The enzyme catalyses ATP + H2O + a folded polypeptide = ADP + phosphate + an unfolded polypeptide.. In terms of biological role, together with its co-chaperonin GroES, plays an essential role in assisting protein folding. The GroEL-GroES system forms a nano-cage that allows encapsulation of the non-native substrate proteins and provides a physical environment optimized to promote and accelerate protein folding. In Pseudomonas putida (strain W619), this protein is Chaperonin GroEL.